The sequence spans 256 residues: Hydroxyacylglutathione hydrolase (256 aa).

Positions 53, 55, 57, 58, 111, 128, and 166 each coordinate Zn(2+).

This sequence belongs to the metallo-beta-lactamase superfamily. Glyoxalase II family. As to quaternary structure, monomer. The cofactor is Zn(2+).

It catalyses the reaction an S-(2-hydroxyacyl)glutathione + H2O = a 2-hydroxy carboxylate + glutathione + H(+). It participates in secondary metabolite metabolism; methylglyoxal degradation; (R)-lactate from methylglyoxal: step 2/2. Functionally, thiolesterase that catalyzes the hydrolysis of S-D-lactoyl-glutathione to form glutathione and D-lactic acid. In Thiobacillus denitrificans (strain ATCC 25259 / T1), this protein is Hydroxyacylglutathione hydrolase.